The primary structure comprises 916 residues: Isoleucine--tRNA ligase (916 aa).

Residues 57 to 67 carry the 'HIGH' region motif; the sequence is PYANGNLHMGH. E554 is an L-isoleucyl-5'-AMP binding site. Positions 595 to 599 match the 'KMSKS' region motif; sequence KMSKS. ATP is bound at residue K598. Residues C885, C888, C905, and C908 each contribute to the Zn(2+) site.

It belongs to the class-I aminoacyl-tRNA synthetase family. IleS type 1 subfamily. In terms of assembly, monomer. It depends on Zn(2+) as a cofactor.

The protein localises to the cytoplasm. It catalyses the reaction tRNA(Ile) + L-isoleucine + ATP = L-isoleucyl-tRNA(Ile) + AMP + diphosphate. Its function is as follows. Catalyzes the attachment of isoleucine to tRNA(Ile). As IleRS can inadvertently accommodate and process structurally similar amino acids such as valine, to avoid such errors it has two additional distinct tRNA(Ile)-dependent editing activities. One activity is designated as 'pretransfer' editing and involves the hydrolysis of activated Val-AMP. The other activity is designated 'posttransfer' editing and involves deacylation of mischarged Val-tRNA(Ile). In Staphylococcus saprophyticus subsp. saprophyticus (strain ATCC 15305 / DSM 20229 / NCIMB 8711 / NCTC 7292 / S-41), this protein is Isoleucine--tRNA ligase.